Here is a 277-residue protein sequence, read N- to C-terminus: Small ribosomal subunit protein uS2 (277 aa).

Positions 247–277 are disordered; the sequence is LSAFESSQDDESDEENREEDLLAKKFDGEAN. Residues 253–264 show a composition bias toward acidic residues; the sequence is SQDDESDEENRE. Over residues 265–277 the composition is skewed to basic and acidic residues; sequence EDLLAKKFDGEAN.

Belongs to the universal ribosomal protein uS2 family.

In Chlamydia pneumoniae (Chlamydophila pneumoniae), this protein is Small ribosomal subunit protein uS2 (rpsB).